A 206-amino-acid polypeptide reads, in one-letter code: Large ribosomal subunit protein eL13z (206 aa).

The interval 183–206 (ERTNKRHAGARAKRAADAEKEEKK) is disordered. A compositionally biased stretch (basic residues) spans 186 to 195 (NKRHAGARAK). Basic and acidic residues predominate over residues 196-206 (RAADAEKEEKK).

This sequence belongs to the eukaryotic ribosomal protein eL13 family.

This chain is Large ribosomal subunit protein eL13z, found in Brassica napus (Rape).